Here is a 201-residue protein sequence, read N- to C-terminus: Small ribosomal subunit protein uS4c (201 aa).

The disordered stretch occupies residues 15-45; sequence LGDLPGLSRKAIKRSYPPGEHGQKSRKPSEY. A compositionally biased stretch (basic and acidic residues) spans 35–45; it reads HGQKSRKPSEY. An S4 RNA-binding domain is found at 90–153; it reads MRLDNTVFRL…ASRKLVENYL (64 aa).

The protein belongs to the universal ribosomal protein uS4 family. In terms of assembly, part of the 30S ribosomal subunit. Contacts protein S5. The interaction surface between S4 and S5 is involved in control of translational fidelity.

Its subcellular location is the plastid. The protein localises to the chloroplast. Its function is as follows. One of the primary rRNA binding proteins, it binds directly to 16S rRNA where it nucleates assembly of the body of the 30S subunit. Functionally, with S5 and S12 plays an important role in translational accuracy. The chain is Small ribosomal subunit protein uS4c (rps4) from Pyropia yezoensis (Susabi-nori).